A 330-amino-acid chain; its full sequence is Ketol-acid reductoisomerase (NADP(+)) (330 aa).

Residues 1-181 form the KARI N-terminal Rossmann domain; the sequence is MNVYYEQDAD…GGTKAGVIET (181 aa). Residues 24 to 27, arginine 47, serine 50, serine 52, and 82 to 85 contribute to the NADP(+) site; these read YGSQ and DQNQ. Residue histidine 107 is part of the active site. Glycine 133 provides a ligand contact to NADP(+). The KARI C-terminal knotted domain occupies 182–327; the sequence is SIKNETETDL…AKLRDMMSWL (146 aa). 4 residues coordinate Mg(2+): aspartate 190, glutamate 194, glutamate 226, and glutamate 230. Serine 251 is a substrate binding site.

It belongs to the ketol-acid reductoisomerase family. Requires Mg(2+) as cofactor.

The enzyme catalyses (2R)-2,3-dihydroxy-3-methylbutanoate + NADP(+) = (2S)-2-acetolactate + NADPH + H(+). The catalysed reaction is (2R,3R)-2,3-dihydroxy-3-methylpentanoate + NADP(+) = (S)-2-ethyl-2-hydroxy-3-oxobutanoate + NADPH + H(+). Its pathway is amino-acid biosynthesis; L-isoleucine biosynthesis; L-isoleucine from 2-oxobutanoate: step 2/4. It functions in the pathway amino-acid biosynthesis; L-valine biosynthesis; L-valine from pyruvate: step 2/4. Functionally, involved in the biosynthesis of branched-chain amino acids (BCAA). Catalyzes an alkyl-migration followed by a ketol-acid reduction of (S)-2-acetolactate (S2AL) to yield (R)-2,3-dihydroxy-isovalerate. In the isomerase reaction, S2AL is rearranged via a Mg-dependent methyl migration to produce 3-hydroxy-3-methyl-2-ketobutyrate (HMKB). In the reductase reaction, this 2-ketoacid undergoes a metal-dependent reduction by NADPH to yield (R)-2,3-dihydroxy-isovalerate. This chain is Ketol-acid reductoisomerase (NADP(+)), found in Pelodictyon phaeoclathratiforme (strain DSM 5477 / BU-1).